The chain runs to 69 residues: Putative membrane protein insertion efficiency factor (69 aa).

It belongs to the UPF0161 family.

The protein resides in the cell inner membrane. Could be involved in insertion of integral membrane proteins into the membrane. The protein is Putative membrane protein insertion efficiency factor of Novosphingobium aromaticivorans (strain ATCC 700278 / DSM 12444 / CCUG 56034 / CIP 105152 / NBRC 16084 / F199).